The following is a 317-amino-acid chain: Adenine deaminase (317 aa).

3 residues coordinate Zn(2+): His-14, His-16, and His-194. Residue Glu-197 is the Proton donor of the active site. Residue Asp-275 participates in Zn(2+) binding. Asp-276 contributes to the substrate binding site.

This sequence belongs to the metallo-dependent hydrolases superfamily. Adenosine and AMP deaminases family. Adenine deaminase type 2 subfamily. It depends on Zn(2+) as a cofactor.

It catalyses the reaction adenine + H2O + H(+) = hypoxanthine + NH4(+). Its function is as follows. Catalyzes the hydrolytic deamination of adenine to hypoxanthine. Plays an important role in the purine salvage pathway and in nitrogen catabolism. This is Adenine deaminase from Bordetella bronchiseptica (strain ATCC BAA-588 / NCTC 13252 / RB50) (Alcaligenes bronchisepticus).